The primary structure comprises 738 residues: Adhesion G protein-coupled receptor L4 (738 aa).

A signal peptide spans 1–19 (MRLLLLLVGLSTLLNHSYT). Residues 20–56 (QNCKTPCLPNAKCEVLDEVAACFCSTGYTGNGITICE) enclose the EGF-like 1 domain. Topologically, residues 20-480 (QNCKTPCLPN…DYNILTRITQ (461 aa)) are extracellular. Disulfide bonds link C22-C32, C26-C41, C43-C55, C61-C73, C67-C82, C84-C105, C111-C123, C117-C132, and C134-C155. One can recognise an EGF-like 2; calcium-binding domain in the interval 57-106 (DVDECNETSVCGDHAVCENTNGGFSCFCVEGYQTSTGKTQFTPNDGSYCQ). N62 carries N-linked (GlcNAc...) asparagine glycosylation. The region spanning 107-156 (DVDECNETSVCGDHAVCENTNGGFSCFCVEGYQTSTGKTQFTPNDGSYCQ) is the EGF-like 3; calcium-binding domain. N-linked (GlcNAc...) asparagine glycosylation is present at N112. N175, N226, N297, N421, N429, and N443 each carry an N-linked (GlcNAc...) asparagine glycan. The GAIN-B domain maps to 292–467 (TQFDMNSTDL…AILMSPSTSI (176 aa)). 2 disulfide bridges follow: C417-C449 and C437-C451. The interval 417–467 (CAFWNYSVDDMNNGSWSSEGCELTYSNDTHTSCRCSHLTHFAILMSPSTSI) is GPS. Residues 481-501 (LGIIISLICLAICIFTFWFFS) form a helical membrane-spanning segment. Over 502–522 (EIQSTRTTIHKNLCCSLFLAQ) the chain is Cytoplasmic. A helical transmembrane segment spans residues 523 to 543 (LVFLVGININTNKLVCSIIAG). At 544-547 (LLHY) the chain is on the extracellular side. Residues 548-568 (FFLAAFAWMCIEGIYLYLIVV) form a helical membrane-spanning segment. Topologically, residues 569–580 (GLIYNKGFLHKN) are cytoplasmic. A helical membrane pass occupies residues 581 to 601 (FYIFGYLSPAVVVGFSASLGY). At 602–621 (RYYGTTKVCWLSTENNFIWS) the chain is on the extracellular side. Residues 622 to 642 (FIGPACLIILVNLLAFGVIIY) traverse the membrane as a helical segment. Over 643–666 (KVFRHTAGLKPEVSCYENIRSCAR) the chain is Cytoplasmic. Residues 667-687 (GALALLFLLGTTWTFGVLHVV) form a helical membrane-spanning segment. Topologically, residues 688 to 694 (HASVVTA) are extracellular. Residues 695-715 (YLFTVSNAFQGMFIFLFLCVL) form a helical membrane-spanning segment. Residues 716 to 738 (SRKIQEEYYRLFKNVPCCFECLR) are Cytoplasmic-facing.

Belongs to the G-protein coupled receptor 2 family. Adhesion G-protein coupled receptor (ADGR) subfamily. As to quaternary structure, heterodimer of 2 chains generated by proteolytic processing; the large extracellular N-terminal fragment and the membrane-bound C-terminal fragment predominantly remain associated and non-covalently linked. In terms of processing, proteolytically cleaved into 2 subunits, an extracellular alpha subunit and a seven-transmembrane subunit. Post-translationally, glycosylated. In terms of tissue distribution, abundantly expressed in heart, lung, and kidney. Less evident expression is observed in brain, skeletal muscle, liver and spleen. No expression is detected in testis.

It is found in the cell membrane. In terms of biological role, endothelial orphan receptor that acts as a key regulator of angiogenesis. This is Adhesion G protein-coupled receptor L4 (Adgrl4) from Rattus norvegicus (Rat).